We begin with the raw amino-acid sequence, 73 residues long: Translation initiation factor IF-1 (73 aa).

In terms of domain architecture, S1-like spans 1-73 (MAKKEDTLVL…TKARVVYRHR (73 aa)).

It belongs to the IF-1 family. As to quaternary structure, component of the 30S ribosomal translation pre-initiation complex which assembles on the 30S ribosome in the order IF-2 and IF-3, IF-1 and N-formylmethionyl-tRNA(fMet); mRNA recruitment can occur at any time during PIC assembly.

It localises to the cytoplasm. One of the essential components for the initiation of protein synthesis. Stabilizes the binding of IF-2 and IF-3 on the 30S subunit to which N-formylmethionyl-tRNA(fMet) subsequently binds. Helps modulate mRNA selection, yielding the 30S pre-initiation complex (PIC). Upon addition of the 50S ribosomal subunit IF-1, IF-2 and IF-3 are released leaving the mature 70S translation initiation complex. The polypeptide is Translation initiation factor IF-1 (Chlamydia pneumoniae (Chlamydophila pneumoniae)).